Reading from the N-terminus, the 218-residue chain is GTP cyclohydrolase 1 (218 aa).

Cys107, His110, and Cys178 together coordinate Zn(2+).

Belongs to the GTP cyclohydrolase I family. Homomer.

It carries out the reaction GTP + H2O = 7,8-dihydroneopterin 3'-triphosphate + formate + H(+). Its pathway is cofactor biosynthesis; 7,8-dihydroneopterin triphosphate biosynthesis; 7,8-dihydroneopterin triphosphate from GTP: step 1/1. This is GTP cyclohydrolase 1 from Azorhizobium caulinodans (strain ATCC 43989 / DSM 5975 / JCM 20966 / LMG 6465 / NBRC 14845 / NCIMB 13405 / ORS 571).